A 109-amino-acid chain; its full sequence is uncharacterized protein (109 aa).

The chain crosses the membrane as a helical span at residues 90–107; the sequence is IICNFWGSLLGVGIAFYQ.

The protein localises to the membrane. This is an uncharacterized protein from Saccharomyces cerevisiae (strain ATCC 204508 / S288c) (Baker's yeast).